Here is a 147-residue protein sequence, read N- to C-terminus: TRAF-interacting protein with FHA domain-containing protein B (147 aa).

In terms of domain architecture, FHA spans 36–108 (LLVGRGQDTH…LHSVNRISFS (73 aa)).

As to quaternary structure, interacts with TIFA.

In terms of biological role, inhibits TIFA-mediated TRAF6 activation possibly by inducing a conformational change in TIFA. The chain is TRAF-interacting protein with FHA domain-containing protein B from Rattus norvegicus (Rat).